We begin with the raw amino-acid sequence, 87 residues long: Candoxin (87 aa).

Positions 1-21 (MKTLLLTLVVVTIVCLDLGYT) are cleaved as a signal peptide. 5 disulfide bridges follow: cysteine 24–cysteine 47, cysteine 27–cysteine 32, cysteine 40–cysteine 64, cysteine 68–cysteine 80, and cysteine 81–cysteine 86.

As to expression, expressed by the venom gland.

It is found in the secreted. Its function is as follows. Binds and inhibits muscular and neuronal nicotinic acetylcholine receptors (nAChR). Is a reversible antagonist of muscle nAChR (alpha-1-beta-1-delta-epsilon/CHRNA1-CHRNB1-CHRND-CHRNE) (IC(50)=10 nM) and a potent and poorly reversible antagonist of the neuronal alpha-7/CHRNA7 nAChR (IC(50)=50 nM). May exhibit differential affinities for the two binding sites on the muscle nAChR. In Bungarus candidus (Malayan krait), this protein is Candoxin.